The primary structure comprises 187 residues: Protein GrpE (187 aa).

Low complexity predominate over residues 1–17 (MSNEEQQQPNPAAQAPE). The interval 1-27 (MSNEEQQQPNPAAQAPEGAVTEGAAPE) is disordered.

It belongs to the GrpE family. As to quaternary structure, homodimer.

It localises to the cytoplasm. In terms of biological role, participates actively in the response to hyperosmotic and heat shock by preventing the aggregation of stress-denatured proteins, in association with DnaK and GrpE. It is the nucleotide exchange factor for DnaK and may function as a thermosensor. Unfolded proteins bind initially to DnaJ; upon interaction with the DnaJ-bound protein, DnaK hydrolyzes its bound ATP, resulting in the formation of a stable complex. GrpE releases ADP from DnaK; ATP binding to DnaK triggers the release of the substrate protein, thus completing the reaction cycle. Several rounds of ATP-dependent interactions between DnaJ, DnaK and GrpE are required for fully efficient folding. The protein is Protein GrpE of Thioalkalivibrio sulfidiphilus (strain HL-EbGR7).